A 228-amino-acid polypeptide reads, in one-letter code: Lipoprotein-releasing system ATP-binding protein LolD (228 aa).

The ABC transporter domain maps to 5-228; it reads FALSAISKSF…SGTLQNYTDY (224 aa). 40 to 47 contacts ATP; that stretch reads GPSGSGKS.

The protein belongs to the ABC transporter superfamily. Lipoprotein translocase (TC 3.A.1.125) family. As to quaternary structure, the complex is composed of two ATP-binding proteins (LolD) and two transmembrane proteins (LolC and LolE).

It is found in the cell inner membrane. Its function is as follows. Part of the ABC transporter complex LolCDE involved in the translocation of mature outer membrane-directed lipoproteins, from the inner membrane to the periplasmic chaperone, LolA. Responsible for the formation of the LolA-lipoprotein complex in an ATP-dependent manner. This is Lipoprotein-releasing system ATP-binding protein LolD from Ehrlichia ruminantium (strain Gardel).